The sequence spans 78 residues: RNA-binding protein KhpA (78 aa).

The KH domain occupies threonine 29–lysine 78.

This sequence belongs to the KhpA RNA-binding protein family.

Its subcellular location is the cytoplasm. A probable RNA-binding protein. This Chlamydia caviae (strain ATCC VR-813 / DSM 19441 / 03DC25 / GPIC) (Chlamydophila caviae) protein is RNA-binding protein KhpA.